We begin with the raw amino-acid sequence, 155 residues long: 3-hydroxyacyl-[acyl-carrier-protein] dehydratase FabZ (155 aa).

The active site involves H58.

Belongs to the thioester dehydratase family. FabZ subfamily.

It localises to the cytoplasm. It carries out the reaction a (3R)-hydroxyacyl-[ACP] = a (2E)-enoyl-[ACP] + H2O. In terms of biological role, involved in unsaturated fatty acids biosynthesis. Catalyzes the dehydration of short chain beta-hydroxyacyl-ACPs and long chain saturated and unsaturated beta-hydroxyacyl-ACPs. This Rhizobium johnstonii (strain DSM 114642 / LMG 32736 / 3841) (Rhizobium leguminosarum bv. viciae) protein is 3-hydroxyacyl-[acyl-carrier-protein] dehydratase FabZ.